Reading from the N-terminus, the 399-residue chain is Subtilisin-like protease 4 (399 aa).

Residues 1 to 19 form the signal peptide; the sequence is MVCLKTLSVFLAAFAAADA. The propeptide occupies 20–118; the sequence is RAVFKTQGHK…VEQDQVVRIS (99 aa). The Inhibitor I9 domain occupies 38–117; the sequence is YIVVMKDGVS…YVEQDQVVRI (80 aa). Positions 128–399 constitute a Peptidase S8 domain; sequence SWGLGRVSHR…NRLLYNGSGQ (272 aa). Catalysis depends on charge relay system residues D160 and H191. N-linked (GlcNAc...) asparagine glycosylation is found at N252 and N308. The Charge relay system role is filled by S346. N395 carries N-linked (GlcNAc...) asparagine glycosylation.

The protein belongs to the peptidase S8 family.

It localises to the secreted. Secreted subtilisin-like serine protease with keratinolytic activity that contributes to pathogenicity. The polypeptide is Subtilisin-like protease 4 (SUB4) (Arthroderma benhamiae (strain ATCC MYA-4681 / CBS 112371) (Trichophyton mentagrophytes)).